We begin with the raw amino-acid sequence, 309 residues long: MILTVTMNPSIDISYPLDVFKMDTVNRVAEVSKTAGGKGLNVTRVLAEIGDNVAATGLIGGTNGHFLLQHLPQNIQAFFYEIAGDTRNCIAILHEGQQTEILEAGPTIAAEEVNGFLHHYRSLMGATDVVAISGSLPAGLPTEFYVQLVEIAHQFGNKVVLDCSGVALQAALGSPVKPTAIKPNNEELSQLLGREVSKDLNELKEVLSEPLFEGIEWIIVSLGADGAFAKHWDTFYKVDIPKIEVVNPVGSGDSTVAGISSALSHQVDDYSLLKKANVLGMLNAQEKMTGHVNVSKYDNLYNQITVKEV.

Belongs to the carbohydrate kinase PfkB family. LacC subfamily.

It catalyses the reaction D-tagatofuranose 6-phosphate + ATP = D-tagatofuranose 1,6-bisphosphate + ADP + H(+). The protein operates within carbohydrate metabolism; D-tagatose 6-phosphate degradation; D-glyceraldehyde 3-phosphate and glycerone phosphate from D-tagatose 6-phosphate: step 1/2. This Streptococcus agalactiae serotype III (strain NEM316) protein is Tagatose-6-phosphate kinase 1.